The sequence spans 63 residues: MSKKCQLTGKVANNGYAVSHSHKRTKKLQNVNLQYKKVWSTEQNKWIKMLISTKAIKTLTKAL.

It belongs to the bacterial ribosomal protein bL28 family.

It localises to the plastid. The protein resides in the chloroplast. The polypeptide is Large ribosomal subunit protein bL28c (rpl28) (Porphyra purpurea (Red seaweed)).